A 141-amino-acid polypeptide reads, in one-letter code: Hemoglobin subunit alpha (141 aa).

The Globin domain occupies 1–141 (VLSPTDKTNV…VSTVLTSKYR (141 aa)). Serine 3 is modified (phosphoserine). An N6-succinyllysine modification is found at lysine 7. At threonine 8 the chain carries Phosphothreonine. Position 11 is an N6-succinyllysine (lysine 11). Tyrosine 24 is modified (phosphotyrosine). Serine 35 carries the phosphoserine modification. The residue at position 40 (lysine 40) is an N6-succinyllysine. Serine 49 bears the Phosphoserine mark. Residue histidine 58 participates in O2 binding. Histidine 87 is a heme b binding site. Phosphoserine is present on serine 102. Threonine 108 is modified (phosphothreonine). Phosphoserine is present on serine 124. Residues threonine 134 and threonine 137 each carry the phosphothreonine modification. Position 138 is a phosphoserine (serine 138).

It belongs to the globin family. As to quaternary structure, heterotetramer of two alpha chains and two beta chains. Red blood cells.

Its function is as follows. Involved in oxygen transport from the lung to the various peripheral tissues. In terms of biological role, hemopressin acts as an antagonist peptide of the cannabinoid receptor CNR1. Hemopressin-binding efficiently blocks cannabinoid receptor CNR1 and subsequent signaling. This chain is Hemoglobin subunit alpha (HBA), found in Rhinoceros unicornis (Greater Indian rhinoceros).